The primary structure comprises 102 residues: Small ribosomal subunit protein uS10 (102 aa).

Belongs to the universal ribosomal protein uS10 family. As to quaternary structure, part of the 30S ribosomal subunit.

Involved in the binding of tRNA to the ribosomes. In Lacticaseibacillus casei (strain BL23) (Lactobacillus casei), this protein is Small ribosomal subunit protein uS10.